Consider the following 256-residue polypeptide: uncharacterized protein (256 aa).

Residues 213–243 (TMSMEAKLEAAKKTLEKFKQEAASKRAKRTK) adopt a coiled-coil conformation. Positions 231 to 256 (KQEAASKRAKRTKPSGSKTTRSTGRK) are disordered. The span at 244 to 256 (PSGSKTTRSTGRK) shows a compositional bias: polar residues.

This is an uncharacterized protein from Acanthamoeba polyphaga (Amoeba).